Here is a 328-residue protein sequence, read N- to C-terminus: dITP/XTP pyrophosphatase (328 aa).

A unknown region spans residues 1–129 (MSEKIYEYKD…ATSEQGFGDI (129 aa)). The NTP pyrophosphatase stretch occupies residues 130 to 324 (ILIATRNEGK…KLMEVFPAWQ (195 aa)). 134-139 (TRNEGK) serves as a coordination point for substrate. Asp-196 serves as the catalytic Proton acceptor. Mg(2+) is bound at residue Asp-196. Residues Ser-197, 280–283 (FGYD), Lys-303, and 308–309 (HR) each bind substrate.

Belongs to the HAM1 NTPase family. As to quaternary structure, homodimer. Mg(2+) is required as a cofactor.

The catalysed reaction is XTP + H2O = XMP + diphosphate + H(+). It catalyses the reaction dITP + H2O = dIMP + diphosphate + H(+). The enzyme catalyses ITP + H2O = IMP + diphosphate + H(+). Its function is as follows. Pyrophosphatase that catalyzes the hydrolysis of nucleoside triphosphates to their monophosphate derivatives, with a high preference for the non-canonical purine nucleotides XTP (xanthosine triphosphate), dITP (deoxyinosine triphosphate) and ITP. Seems to function as a house-cleaning enzyme that removes non-canonical purine nucleotides from the nucleotide pool, thus preventing their incorporation into DNA/RNA and avoiding chromosomal lesions. The protein is dITP/XTP pyrophosphatase of Streptococcus pyogenes serotype M3 (strain ATCC BAA-595 / MGAS315).